A 339-amino-acid chain; its full sequence is Ketol-acid reductoisomerase (NADP(+)) (339 aa).

In terms of domain architecture, KARI N-terminal Rossmann spans 1-182 (MRVYYDRDAD…GGGRAGIIET (182 aa)). NADP(+) contacts are provided by residues 24–27 (YGSQ), Arg-48, Ser-51, Ser-53, and 83–86 (DELQ). His-108 is a catalytic residue. Gly-134 lines the NADP(+) pocket. The KARI C-terminal knotted domain maps to 183 to 328 (TFKEECETDL…EKLREMMPWI (146 aa)). Residues Asp-191, Glu-195, Glu-227, and Glu-231 each coordinate Mg(2+). Ser-252 provides a ligand contact to substrate.

This sequence belongs to the ketol-acid reductoisomerase family. Mg(2+) is required as a cofactor.

It catalyses the reaction (2R)-2,3-dihydroxy-3-methylbutanoate + NADP(+) = (2S)-2-acetolactate + NADPH + H(+). The catalysed reaction is (2R,3R)-2,3-dihydroxy-3-methylpentanoate + NADP(+) = (S)-2-ethyl-2-hydroxy-3-oxobutanoate + NADPH + H(+). It participates in amino-acid biosynthesis; L-isoleucine biosynthesis; L-isoleucine from 2-oxobutanoate: step 2/4. The protein operates within amino-acid biosynthesis; L-valine biosynthesis; L-valine from pyruvate: step 2/4. Functionally, involved in the biosynthesis of branched-chain amino acids (BCAA). Catalyzes an alkyl-migration followed by a ketol-acid reduction of (S)-2-acetolactate (S2AL) to yield (R)-2,3-dihydroxy-isovalerate. In the isomerase reaction, S2AL is rearranged via a Mg-dependent methyl migration to produce 3-hydroxy-3-methyl-2-ketobutyrate (HMKB). In the reductase reaction, this 2-ketoacid undergoes a metal-dependent reduction by NADPH to yield (R)-2,3-dihydroxy-isovalerate. The sequence is that of Ketol-acid reductoisomerase (NADP(+)) from Azorhizobium caulinodans (strain ATCC 43989 / DSM 5975 / JCM 20966 / LMG 6465 / NBRC 14845 / NCIMB 13405 / ORS 571).